We begin with the raw amino-acid sequence, 476 residues long: Cytosolic iron-sulfur assembly component 3 (476 aa).

A2 carries the post-translational modification N-acetylalanine. Residues C24, C71, C74, C77, C190, C246, C395, and C399 each contribute to the [4Fe-4S] cluster site.

It belongs to the NARF family. External component of the CIA complex. In the CIA complex, interacts directly with CIAO1 and MMS19.

In terms of biological role, component of the cytosolic iron-sulfur protein assembly (CIA) complex, a multiprotein complex that mediates the incorporation of iron-sulfur cluster into extramitochondrial Fe/S proteins. Seems to negatively regulate the level of HIF1A expression, although this effect could be indirect. This chain is Cytosolic iron-sulfur assembly component 3, found in Rattus norvegicus (Rat).